Here is a 353-residue protein sequence, read N- to C-terminus: D-glycerol 3-phosphate phosphatase (353 aa).

Asp14 (nucleophile) is an active-site residue. The Mg(2+) site is built by Asp14, Asp16, and Asp209. Catalysis depends on Asp16, which acts as the Proton donor.

Belongs to the HAD-like hydrolase superfamily. In terms of assembly, homodimer. Mg(2+) is required as a cofactor. Requires Co(2+) as cofactor. Mn(2+) serves as cofactor.

It catalyses the reaction sn-glycerol 1-phosphate + H2O = glycerol + phosphate. Its pathway is glycerolipid metabolism. In terms of biological role, dephosphorylates D-glycerol 3-phosphate (sn-glycerol 1-phosphate). Is the final enzyme involved in the recycling/catabolism of glycerophospholipid polar heads. To a lesser extent, is also able to act on glycerol 2-phosphate and D-ribulose 5-phosphate, but cannot use D-glyceraldehyde 3-phosphate, dihydroxyacetone-phosphate, UMP or GMP as substrates. In Mycobacterium tuberculosis (strain ATCC 25618 / H37Rv), this protein is D-glycerol 3-phosphate phosphatase.